A 1047-amino-acid polypeptide reads, in one-letter code: Helicase-like transcription factor CHR27 (1047 aa).

A compositionally biased stretch (low complexity) spans 1–11; sequence MDSAIEISSGS. 3 disordered regions span residues 1–89, 103–130, and 145–174; these read MDSA…SGSG, RTLP…SGSR, and KRTL…GSRF. Polar residues-rich tracts occupy residues 52-88 and 118-128; these read TNQA…SSGS and SGTNNISNASG. A Helicase ATP-binding domain is found at 296–597; that stretch reads ETSSFNCPGG…YSYFRFLRYD (302 aa). ATP is bound at residue 309-316; the sequence is DDQGLGKT. Disordered stretches follow at residues 349–407 and 511–533; these read ADDE…TRAF and VGAS…SEPD. Positions 354-368 are enriched in basic and acidic residues; it reads DNAKHESGSHVKPEL. The span at 370 to 379 shows a compositional bias: polar residues; sequence VSSNSETSVL. Over residues 385 to 400 the composition is skewed to acidic residues; sequence DENDSSDMEKAEDEEA. Residues 511–523 are compositionally biased toward basic residues; the sequence is VGASKKSKRRGRK. An RING-type; degenerate zinc finger spans residues 751-790; the sequence is CYECNEPPEKPVVTLCGHIFCYECVLEYITGDENTCPVPR. A compositionally biased stretch (polar residues) spans 851-868; it reads QPDSPNSAQHGQMPSSSR. The interval 851-873 is disordered; the sequence is QPDSPNSAQHGQMPSSSRPYDDD. The Helicase C-terminal domain maps to 887–1042; that stretch reads SPSQGAVKTI…ATRLTVDDLK (156 aa).

The protein belongs to the SNF2/RAD54 helicase family. RAD16 subfamily. In terms of assembly, interacts with SUVR2. Interacts with itself.

It localises to the nucleus. Its function is as follows. Probable helicase-like transcription factor involved in transcriptional gene silencing. Associates with SUVR2 and contributes to transcriptional gene silencing at RNA-directed DNA methylation (RdDM) target loci but also at RdDM-independent target loci. May be involved in nucleosome positioning to form ordered nucleosome arrays on chromatin. Associates with SUVR2 and functions redundantly with FRG2. Required for the efficient methylation of a broad range of RdDM target loci. The protein is Helicase-like transcription factor CHR27 of Arabidopsis thaliana (Mouse-ear cress).